Consider the following 472-residue polypeptide: L-fuculokinase (472 aa).

Belongs to the FGGY kinase family. Requires a divalent metal cation as cofactor.

The enzyme catalyses L-fuculose + ATP = L-fuculose 1-phosphate + ADP + H(+). It participates in carbohydrate degradation; L-fucose degradation; L-lactaldehyde and glycerone phosphate from L-fucose: step 2/3. Functionally, catalyzes the phosphorylation of L-fuculose. This is L-fuculokinase from Escherichia coli O157:H7.